The chain runs to 207 residues: Neuroendocrine protein 7B2 (207 aa).

Residues 1–22 form the signal peptide; sequence MVSTMLSGLVLWLTFGWTPALA. C116 and C125 form a disulfide bridge. Phosphoserine is present on residues S136 and S200. Residues 168-207 form a disordered region; the sequence is KGGQRRKRRSVNPYLQGQRLDNVVAKKSVPHFSDEDKDPE.

This sequence belongs to the 7B2 family. As to quaternary structure, interacts with PCSK2/PC2 early in the secretory pathway. Dissociation occurs at later stages. Proteolytically cleaved in the Golgi by a furin-like convertase to generate bioactive peptides. In terms of processing, sulfated on tyrosine residues.

It is found in the secreted. Functionally, acts as a molecular chaperone for PCSK2/PC2, preventing its premature activation in the regulated secretory pathway. Binds to inactive PCSK2 in the endoplasmic reticulum and facilitates its transport from there to later compartments of the secretory pathway where it is proteolytically matured and activated. Also required for cleavage of PCSK2 but does not appear to be involved in its folding. Plays a role in regulating pituitary hormone secretion. The C-terminal peptide inhibits PCSK2 in vitro. This is Neuroendocrine protein 7B2 (SCG5) from Sus scrofa (Pig).